A 204-amino-acid polypeptide reads, in one-letter code: uncharacterized protein (204 aa).

A disordered region spans residues 47–108; sequence TDSSDDEGGA…EDSDEEGEGG (62 aa). Positions 49–106 are enriched in acidic residues; that stretch reads SSDDEGGASSGDEGEASSDDEGDASSDDEEEASSDGEGVVEDEETLDAEGEDSDEEGE.

Its subcellular location is the mitochondrion. This is an uncharacterized protein from Paramecium tetraurelia.